A 352-amino-acid polypeptide reads, in one-letter code: C-C chemokine receptor type 5 (352 aa).

Residues 1–30 lie on the Extracellular side of the membrane; it reads MDYQVSSPTYDIDYDTSEPCQKINVKQIAA. Y3 bears the Sulfotyrosine mark. S6 and S7 each carry an O-linked (GalNAc...) serine glycan. Sulfotyrosine is present on residues Y10 and Y14. Cystine bridges form between C20–C269 and C101–C178. A helical membrane pass occupies residues 31–58; sequence RLLPPLYSLVFIFGFVGNMLVILVLINC. Residues 59-68 lie on the Cytoplasmic side of the membrane; sequence KRLKSMTDIY. Residues 69 to 89 form a helical membrane-spanning segment; that stretch reads LLNLAISDLFFLLTVPFWAHY. Residues 90 to 102 lie on the Extracellular side of the membrane; that stretch reads AAAQWDFGNTMCQ. The helical transmembrane segment at 103-124 threads the bilayer; sequence LLTGLYFIGFFSGIFFIILLTI. The Cytoplasmic portion of the chain corresponds to 125–141; it reads DRYLAIVHAVFALKART. A helical membrane pass occupies residues 142 to 166; the sequence is VTFGVVTSVITWVVAVFASLPGIIF. Over 167–198 the chain is Extracellular; sequence TRSQKEGLHYTCSSHFPYSQYQFWKNFQTLKI. The helical transmembrane segment at 199 to 218 threads the bilayer; sequence VILGLVLPLLVMVICYSGIL. Residues 219-235 lie on the Cytoplasmic side of the membrane; it reads KTLLRCRNEKKRHRAVR. The helical transmembrane segment at 236–260 threads the bilayer; it reads LIFTIMIVYFLFWAPYNIVLLLNTF. Residues 261–277 are Extracellular-facing; the sequence is QEFFGLNNCSSSNRLDQ. The chain crosses the membrane as a helical span at residues 278 to 301; the sequence is AMQVTETLGMTHCCINPIIYAFVG. Residues 302–352 lie on the Cytoplasmic side of the membrane; sequence EKFRNYLLVFFQKHIAKHFCKCCSIFQQEAPERASSVYTRSTGEQEISVGL. 3 S-palmitoyl cysteine lipidation sites follow: C321, C323, and C324. S336, S337, S342, and S349 each carry phosphoserine; by BARK1.

Belongs to the G-protein coupled receptor 1 family. As to quaternary structure, interacts with PRAF2. Efficient ligand binding to CCL3/MIP-1alpha and CCL4/MIP-1beta requires sulfation, O-glycosylation and sialic acid modifications. Glycosylation on Ser-6 is required for efficient binding of CCL4. Interacts with GRK2. Interacts with ARRB1 and ARRB2. Interacts with CNIH4. Interacts with S100A4; this interaction stimulates T-lymphocyte chemotaxis. In terms of processing, sulfated on at least 2 of the N-terminal tyrosines. Sulfation is required for efficient binding of the chemokines, CCL3 and CCL4. Post-translationally, palmitoylation in the C-terminal is important for cell surface expression. Phosphorylation on serine residues in the C-terminal is stimulated by binding CC chemokines especially by APO-RANTES. In terms of processing, O-glycosylated, but not N-glycosylated. Ser-6 appears to be the major site even if Ser-7 may be also O-glycosylated. Also sialylated glycans present which contribute to chemokine binding. Thr-16 and Ser-17 may also be glycosylated and, if so, with small moieties such as a T-antigen.

The protein resides in the cell membrane. Its function is as follows. Receptor for a number of inflammatory CC-chemokines including CCL3/MIP-1-alpha, CCL4/MIP-1-beta and RANTES and subsequently transduces a signal by increasing the intracellular calcium ion level. May play a role in the control of granulocytic lineage proliferation or differentiation. Participates in T-lymphocyte migration to the infection site by acting as a chemotactic receptor. The polypeptide is C-C chemokine receptor type 5 (CCR5) (Nomascus leucogenys (Northern white-cheeked gibbon)).